The primary structure comprises 594 residues: MARSRRRSSVDEMDVGGSATSEYENCGGPSFSPLNLSRPKKSTRGRSLRSAQAWGGKQLHPERSTPLARNDCGPSSKPRRRHEVGRSNKGLGASLDRTDEDTSQCPRIRASAIRCGASTRKIVRITGECDAQQGDSRPGRSEMAGWHSPPKRRRTPSRHGNSDNERSHLPRLSSHGVVRVGGRPLTQTPLQKTIILQPKLVRKVFMPTFTVNPEMHYRRVALGEIPKFGGAGSYGEVQIFKQTGLAIKTASSRSCFEHELAVSLLTGECSLRAQASLGIGGIICLMAFSLPSKQMVFPAYDADLNAYGYRLSRSGPPSVLVTESIERAFIGLGRALVYLNTSCGLTHLDVKGGNIFVNHSHFVISDCVIGDLSLMTLNTNSMAMRAEFEIDTGEEEIKTLRLPRSASQMTFSFVIGHGLNQPISVIADFINNSGLAKSTGPIKHDVGLTIDLYALGQALLELLLVGCISPCLSVPILRTATYYYYSNKLSVDYALDLLAYRCSLYPALFPTTPLTTIYGIPWDQVEGVFESIAGAHHREAFRAHLERYRLTHRRLFASIRIPSAFTGVLELVSLLCHANEKARLSIPLLWTPRP.

Disordered regions lie at residues 1–105 and 128–183; these read MARS…TSQC and ECDA…VGGR. Over residues 38-47 the composition is skewed to basic residues; it reads RPKKSTRGRS. The region spanning 223 to 594 is the Protein kinase domain; it reads GEIPKFGGAG…SIPLLWTPRP (372 aa). Residues 229–237 and K248 each bind ATP; that span reads GGAGSYGEV. D349 serves as the catalytic Proton acceptor.

This sequence belongs to the protein kinase superfamily. Ser/Thr protein kinase family. Autophosphorylated.

It localises to the virion tegument. It is found in the host nucleus. It carries out the reaction L-seryl-[protein] + ATP = O-phospho-L-seryl-[protein] + ADP + H(+). The catalysed reaction is L-threonyl-[protein] + ATP = O-phospho-L-threonyl-[protein] + ADP + H(+). Functionally, multifunctional serine/threonine kinase that plays a role in several processes including egress of virus particles from the nucleus, modulation of the actin cytoskeleton and regulation of viral and cellular gene expression. Regulates the nuclear localization of viral envelopment factors UL34 and UL31 homologs, by phosphorylating the US3 kinase homolog, indicating a role in nuclear egress. Disrupts host nuclear lamins, including LMNA and LMNB1. Phosphorylates the viral Fc receptor composed of glycoproteins E (gE) and I (gI). Phosphorylation of glycoprotein E (gE) by UL13 homolog alters its subcellular localization, from the host early endosome to the plasma membrane. Participates in the transcriptional regulation of cellular and viral mRNAs mainly by phosphorylating the viral transcriptional regulator ICP22 homolog. This Equus caballus (Horse) protein is Serine/threonine-protein kinase UL13 homolog.